A 697-amino-acid polypeptide reads, in one-letter code: Potassium-transporting ATPase ATP-binding subunit (697 aa).

4 helical membrane passes run 36-56, 66-86, 218-238, and 253-273; these read VMFVVAIVSALTSVLFLRDLI, LQIIIWLWFTVLFANFAEAVA, IALNILLVGMTLIFVLATATI, and VLVALFVTLIPTTIGALLSAI. Residue Asp306 is the 4-aspartylphosphate intermediate of the active site. Residues Asp343, Glu347, 376 to 383, and Lys394 each bind ATP; that span reads FTAQTRMS. Asp526 and Asp530 together coordinate Mg(2+). The next 3 helical transmembrane spans lie at 595-615, 631-651, and 669-689; these read YFAIIPAMFAVFYVAPGQSTG, AILSAIIFNALIIIALIPLSL, and LLVYGLGGIIVPFVGIKIIDM.

This sequence belongs to the cation transport ATPase (P-type) (TC 3.A.3) family. Type IA subfamily. The system is composed of three essential subunits: KdpA, KdpB and KdpC.

The protein localises to the cell inner membrane. It carries out the reaction K(+)(out) + ATP + H2O = K(+)(in) + ADP + phosphate + H(+). Part of the high-affinity ATP-driven potassium transport (or Kdp) system, which catalyzes the hydrolysis of ATP coupled with the electrogenic transport of potassium into the cytoplasm. This subunit is responsible for energy coupling to the transport system and for the release of the potassium ions to the cytoplasm. The polypeptide is Potassium-transporting ATPase ATP-binding subunit (Mesorhizobium japonicum (strain LMG 29417 / CECT 9101 / MAFF 303099) (Mesorhizobium loti (strain MAFF 303099))).